A 232-amino-acid chain; its full sequence is Large ribosomal subunit protein uL1 (232 aa).

The protein belongs to the universal ribosomal protein uL1 family. In terms of assembly, part of the 50S ribosomal subunit.

Functionally, binds directly to 23S rRNA. The L1 stalk is quite mobile in the ribosome, and is involved in E site tRNA release. In terms of biological role, protein L1 is also a translational repressor protein, it controls the translation of the L11 operon by binding to its mRNA. The sequence is that of Large ribosomal subunit protein uL1 from Xanthomonas campestris pv. campestris (strain B100).